The chain runs to 405 residues: FAD-dependent monooxygenase thnD (405 aa).

FAD contacts are provided by E30, A45, R106, D308, and G321.

This sequence belongs to the paxM FAD-dependent monooxygenase family. FAD serves as cofactor.

In terms of biological role, FAD-dependent monooxygenase; part of the gene cluster that produces the tetronate natural products trihazones. Transcription analysis of thnD confirmed this gene is expressed, hence its role in the biosynthetic pathway remains cryptic. The pathway begins with the formation of trihazone A by the hybrid PKS-NRPS synthetase thnA and the trans-enoyl reductase thnE. Trihazone A is further decarboxylated by the 2-oxoglutarate-dependent dioxygenase thnC to produce trihazone D. The function of the FAD-dependent monooxygenase thnD has still to be identified. This Trichoderma harzianum (Hypocrea lixii) protein is FAD-dependent monooxygenase thnD.